The primary structure comprises 717 residues: Transport/processing ATP-binding protein ComA (717 aa).

Positions 11–138 (QVDQMDCGVA…EEWTGVTLFM (128 aa)) constitute a Peptidase C39 domain. Cys17 is a catalytic residue. The next 6 membrane-spanning stretches (helical) occupy residues 166 to 186 (GLIA…IVGS), 205 to 225 (LGII…LSYA), 237 to 257 (LSID…MSFF), 282 to 302 (TILS…VLFS), 306 to 326 (NLFF…FAFM), and 397 to 417 (VAHL…VMDG). The 283-residue stretch at 168-450 (IANIVLATLL…IINLQTKLQT (283 aa)) folds into the ABC transmembrane type-1 domain. The 234-residue stretch at 484–717 (MTFKQVHYKY…GGFYAHLVNS (234 aa)) folds into the ABC transporter domain. 517 to 524 (GISGSGKT) lines the ATP pocket.

Belongs to the ABC transporter superfamily. Competence factor exporter (TC 3.A.1.112.1) family.

Its subcellular location is the cell membrane. Its function is as follows. Required for induction of competence. Seems to transport the competence-stimulating peptide (CSP). This Streptococcus pneumoniae serotype 4 (strain ATCC BAA-334 / TIGR4) protein is Transport/processing ATP-binding protein ComA (comA).